A 252-amino-acid chain; its full sequence is Triosephosphate isomerase (252 aa).

9-11 (NWK) lines the substrate pocket. Histidine 100 functions as the Electrophile in the catalytic mechanism. Catalysis depends on glutamate 171, which acts as the Proton acceptor. Substrate contacts are provided by residues glycine 177, serine 216, and 237–238 (GG).

Belongs to the triosephosphate isomerase family. Homodimer.

Its subcellular location is the cytoplasm. It catalyses the reaction D-glyceraldehyde 3-phosphate = dihydroxyacetone phosphate. Its pathway is carbohydrate biosynthesis; gluconeogenesis. It participates in carbohydrate degradation; glycolysis; D-glyceraldehyde 3-phosphate from glycerone phosphate: step 1/1. In terms of biological role, involved in the gluconeogenesis. Catalyzes stereospecifically the conversion of dihydroxyacetone phosphate (DHAP) to D-glyceraldehyde-3-phosphate (G3P). This Polynucleobacter necessarius subsp. necessarius (strain STIR1) protein is Triosephosphate isomerase.